Consider the following 75-residue polypeptide: Kappa-scoloptoxin(03)-Ssm1e (75 aa).

Residues 1–23 form the signal peptide; the sequence is MKSSMAILLVMALIIFTLDKNYS.

The protein belongs to the scoloptoxin-03 family. Contains 3 disulfide bonds. Expressed by the venom gland.

It is found in the secreted. In terms of biological role, inhibits voltage-gated potassium channels. The polypeptide is Kappa-scoloptoxin(03)-Ssm1e (Scolopendra mutilans (Chinese red-headed centipede)).